The sequence spans 969 residues: GATOR2 complex protein Wdr59 (969 aa).

Positions 1-24 (MPPTETLRPGERGTAGGPGAGAPE) are disordered. WD repeat units lie at residues 127–167 (GHTR…KPAL), 172–211 (VCMS…CPTH), 215–255 (AHLN…RAEK), 258–303 (TTMS…DPIC), and 307–351 (GHTD…LKLC). A Phosphothreonine modification is found at threonine 373. The RWD domain maps to 435–538 (HEFSLLNTNM…RALVAAMKKK (104 aa)). Residues 891-911 (ECRKCAKPKRTPKCEPCKRPV) form a C4-type zinc finger. Zn(2+) contacts are provided by cysteine 892, cysteine 895, cysteine 904, cysteine 907, cysteine 917, cysteine 928, histidine 933, histidine 936, histidine 939, cysteine 950, cysteine 953, cysteine 955, and cysteine 957. Residues 912-960 (LFCVLCRLPVKGAANACLACGHGGHIDHMMQWFEKHNVCATCGCKCLER) form an RING-type; atypical zinc finger.

Belongs to the WD repeat WDR59 family. In terms of assembly, component of the GATOR complex consisting of mio, Nup44A/Seh1, Im11, Nplr3, Nplr2, Wdr24, Wdr59 and Sec13. Within the GATOR complex, probable component of the GATOR2 subcomplex which is likely composed of mio, Nup44A/Seh1, Wdr24, Wdr59 and Sec13. The GATOR2 complex associates with unmet in the absence of S-adenosyl-L-methionine; the mio-Wdr24-Nup44A subcomplex is essential and sufficient for this interaction while Wdr59 and Sec13 are dispensable. This association acts as a nutrient sensor to inhibit mTORC1 signaling in the absence of methionine.

The protein localises to the lysosome membrane. A component of the GATOR complex, which functions as a regulator of the amino acid-sensing branch of the mTORC1 signaling pathway. The two GATOR subcomplexes, GATOR1 and GATOR2, regulate the mTORC1 pathway in order to mediate metabolic homeostasis, female gametogenesis and the response to amino acid limitation and complete starvation. GATOR2 activates the mTORC1 signaling pathway through the inhibition of the GATOR1 subcomplex, controlling the switch to cell proliferation and growth under nutrient replete conditions and during female oocyte development. Acts as an atypical component of the GATOR2 subcomplex, which can either promote or inhibit mTORC1 signaling, depending on tissues: inhibits mTORC1 activity by preventing the activity of GATOR2 in the ovary and the eye imaginal disk brain, while it promotes mTORC1 activity in the fat body. The protein is GATOR2 complex protein Wdr59 of Drosophila melanogaster (Fruit fly).